We begin with the raw amino-acid sequence, 715 residues long: Ribosomal RNA large subunit methyltransferase K/L (715 aa).

The region spanning 43–154 (TQYRALLWSR…RDDLVLSLDL (112 aa)) is the THUMP domain.

The protein belongs to the methyltransferase superfamily. RlmKL family.

The protein resides in the cytoplasm. The enzyme catalyses guanosine(2445) in 23S rRNA + S-adenosyl-L-methionine = N(2)-methylguanosine(2445) in 23S rRNA + S-adenosyl-L-homocysteine + H(+). It catalyses the reaction guanosine(2069) in 23S rRNA + S-adenosyl-L-methionine = N(2)-methylguanosine(2069) in 23S rRNA + S-adenosyl-L-homocysteine + H(+). In terms of biological role, specifically methylates the guanine in position 2445 (m2G2445) and the guanine in position 2069 (m7G2069) of 23S rRNA. The sequence is that of Ribosomal RNA large subunit methyltransferase K/L from Mannheimia succiniciproducens (strain KCTC 0769BP / MBEL55E).